A 333-amino-acid chain; its full sequence is DNA-directed RNA polymerase subunit alpha (333 aa).

The alpha N-terminal domain (alpha-NTD) stretch occupies residues 1–233 (MVQEKLRFST…DLFIPFLHAE (233 aa)). Residues 266-333 (KKEIALKSIF…DILKIQKYFT (68 aa)) are alpha C-terminal domain (alpha-CTD).

Belongs to the RNA polymerase alpha chain family. In terms of assembly, in plastids the minimal PEP RNA polymerase catalytic core is composed of four subunits: alpha, beta, beta', and beta''. When a (nuclear-encoded) sigma factor is associated with the core the holoenzyme is formed, which can initiate transcription.

It is found in the plastid. It localises to the chloroplast. The enzyme catalyses RNA(n) + a ribonucleoside 5'-triphosphate = RNA(n+1) + diphosphate. Its function is as follows. DNA-dependent RNA polymerase catalyzes the transcription of DNA into RNA using the four ribonucleoside triphosphates as substrates. The chain is DNA-directed RNA polymerase subunit alpha from Phaseolus angularis (Azuki bean).